The sequence spans 125 residues: Large ribosomal subunit protein bL12 (125 aa).

The protein belongs to the bacterial ribosomal protein bL12 family. Homodimer. Part of the ribosomal stalk of the 50S ribosomal subunit. Forms a multimeric L10(L12)X complex, where L10 forms an elongated spine to which 2 to 4 L12 dimers bind in a sequential fashion. Binds GTP-bound translation factors.

In terms of biological role, forms part of the ribosomal stalk which helps the ribosome interact with GTP-bound translation factors. Is thus essential for accurate translation. The sequence is that of Large ribosomal subunit protein bL12 from Rickettsia felis (strain ATCC VR-1525 / URRWXCal2) (Rickettsia azadi).